The chain runs to 231 residues: Glutathione-S-transferase (231 aa).

One can recognise a GST N-terminal domain in the interval 15–98; sequence LFAVKGTATS…YIADAYDKDG (84 aa).

It belongs to the GST superfamily.

It carries out the reaction RX + glutathione = an S-substituted glutathione + a halide anion + H(+). Conjugation of reduced glutathione to a wide number of exogenous and endogenous hydrophobic electrophiles. This Alternaria alternata (Alternaria rot fungus) protein is Glutathione-S-transferase.